The primary structure comprises 689 residues: Glycine--tRNA ligase beta subunit (689 aa).

It belongs to the class-II aminoacyl-tRNA synthetase family. As to quaternary structure, tetramer of two alpha and two beta subunits.

It localises to the cytoplasm. The catalysed reaction is tRNA(Gly) + glycine + ATP = glycyl-tRNA(Gly) + AMP + diphosphate. In Dictyoglomus turgidum (strain DSM 6724 / Z-1310), this protein is Glycine--tRNA ligase beta subunit.